The chain runs to 585 residues: Bifunctional lycopene cyclase/phytoene synthase (585 aa).

The interval 1–243 (MGFDYAIVHV…IVFGQLAFDN (243 aa)) is lycopene beta-cyclase. 7 helical membrane passes run 3 to 23 (FDYA…LTLL), 35 to 55 (KVLF…SYLI), 75 to 97 (IPLE…YLIL), 123 to 141 (LAGQ…LRVH), 151 to 171 (LIVV…YQFI), 173 to 193 (GLPW…LWLV), and 221 to 241 (IEEA…QLAF). Residues 250–585 (TFPALFPKPP…AWRTLNKSIA (336 aa)) are phytoene synthase.

This sequence in the N-terminal section; belongs to the lycopene beta-cyclase family. In the C-terminal section; belongs to the phytoene/squalene synthase family.

It is found in the membrane. The catalysed reaction is all-trans-lycopene = gamma-carotene. It carries out the reaction gamma-carotene = all-trans-beta-carotene. The enzyme catalyses 2 (2E,6E,10E)-geranylgeranyl diphosphate = 15-cis-phytoene + 2 diphosphate. The protein operates within carotenoid biosynthesis; beta-carotene biosynthesis. It functions in the pathway carotenoid biosynthesis; phytoene biosynthesis; all-trans-phytoene from geranylgeranyl diphosphate: step 1/1. In terms of biological role, bifunctional enzyme that catalyzes the reactions from geranylgeranyl diphosphate to phytoene (phytoene synthase) and lycopene to beta-carotene via the intermediate gamma-carotene (lycopene cyclase). This is Bifunctional lycopene cyclase/phytoene synthase from Phaeosphaeria nodorum (strain SN15 / ATCC MYA-4574 / FGSC 10173) (Glume blotch fungus).